The chain runs to 154 residues: Insulin-like peptide 1 (154 aa).

Positions 1-29 (MFSQHNGAAVHGLRLQSLLIAAMLTAAMA) are cleaved as a signal peptide. Cystine bridges form between Cys-49-Cys-138, Cys-61-Cys-151, and Cys-137-Cys-142. The tract at residues 72–92 (RESLLGNSDDDEDTEQEVQDD) is disordered. The propeptide at 73-122 (ESLLGNSDDDEDTEQEVQDDSSMWQTLDGAGYSFSPLLTNLYGSEVLIKM) is connecting peptide. A compositionally biased stretch (acidic residues) spans 79-91 (SDDDEDTEQEVQD).

It belongs to the insulin family. In terms of assembly, heterodimer of a B chain and an A chain linked by two disulfide bonds.

The protein resides in the secreted. In terms of biological role, possible ligand of InR/insulin-like receptor. The polypeptide is Insulin-like peptide 1 (Drosophila melanogaster (Fruit fly)).